A 113-amino-acid polypeptide reads, in one-letter code: Iron-sulfur cluster insertion protein ErpA (113 aa).

The iron-sulfur cluster site is built by Cys41, Cys105, and Cys107.

It belongs to the HesB/IscA family. As to quaternary structure, homodimer. The cofactor is iron-sulfur cluster.

Required for insertion of 4Fe-4S clusters for at least IspG. In Actinobacillus pleuropneumoniae serotype 5b (strain L20), this protein is Iron-sulfur cluster insertion protein ErpA.